Consider the following 217-residue polypeptide: ATP phosphoribosyltransferase (217 aa).

This sequence belongs to the ATP phosphoribosyltransferase family. Short subfamily. Heteromultimer composed of HisG and HisZ subunits.

The protein localises to the cytoplasm. The enzyme catalyses 1-(5-phospho-beta-D-ribosyl)-ATP + diphosphate = 5-phospho-alpha-D-ribose 1-diphosphate + ATP. It functions in the pathway amino-acid biosynthesis; L-histidine biosynthesis; L-histidine from 5-phospho-alpha-D-ribose 1-diphosphate: step 1/9. In terms of biological role, catalyzes the condensation of ATP and 5-phosphoribose 1-diphosphate to form N'-(5'-phosphoribosyl)-ATP (PR-ATP). Has a crucial role in the pathway because the rate of histidine biosynthesis seems to be controlled primarily by regulation of HisG enzymatic activity. The chain is ATP phosphoribosyltransferase from Burkholderia vietnamiensis (strain G4 / LMG 22486) (Burkholderia cepacia (strain R1808)).